Here is a 117-residue protein sequence, read N- to C-terminus: Ribosomal silencing factor RsfS (117 aa).

It belongs to the Iojap/RsfS family. In terms of assembly, interacts with ribosomal protein uL14 (rplN).

It localises to the cytoplasm. Its function is as follows. Functions as a ribosomal silencing factor. Interacts with ribosomal protein uL14 (rplN), blocking formation of intersubunit bridge B8. Prevents association of the 30S and 50S ribosomal subunits and the formation of functional ribosomes, thus repressing translation. The chain is Ribosomal silencing factor RsfS from Halalkalibacterium halodurans (strain ATCC BAA-125 / DSM 18197 / FERM 7344 / JCM 9153 / C-125) (Bacillus halodurans).